The following is a 490-amino-acid chain: Membrane-bound lytic murein transglycosylase F (490 aa).

The first 32 residues, 1-32, serve as a signal peptide directing secretion; sequence MFALTAYRLRCAAWLLATGIFLLLAGCSEAKA. The interval 33 to 269 is non-LT domain; it reads PTALERVQKE…RLKDRYYGHV (237 aa). The segment at 270 to 490 is LT domain; the sequence is DVLGYVGAYT…PEEDSGDEKL (221 aa). E316 is an active-site residue. The segment at 467-490 is disordered; that stretch reads AESGLHLPGVNKTRPEEDSGDEKL. Residues 479–490 are compositionally biased toward basic and acidic residues; the sequence is TRPEEDSGDEKL.

It in the N-terminal section; belongs to the bacterial solute-binding protein 3 family. This sequence in the C-terminal section; belongs to the transglycosylase Slt family.

Its subcellular location is the cell outer membrane. It catalyses the reaction Exolytic cleavage of the (1-&gt;4)-beta-glycosidic linkage between N-acetylmuramic acid (MurNAc) and N-acetylglucosamine (GlcNAc) residues in peptidoglycan, from either the reducing or the non-reducing ends of the peptidoglycan chains, with concomitant formation of a 1,6-anhydrobond in the MurNAc residue.. Its function is as follows. Murein-degrading enzyme that degrades murein glycan strands and insoluble, high-molecular weight murein sacculi, with the concomitant formation of a 1,6-anhydromuramoyl product. Lytic transglycosylases (LTs) play an integral role in the metabolism of the peptidoglycan (PG) sacculus. Their lytic action creates space within the PG sacculus to allow for its expansion as well as for the insertion of various structures such as secretion systems and flagella. The protein is Membrane-bound lytic murein transglycosylase F of Pseudomonas aeruginosa (strain ATCC 15692 / DSM 22644 / CIP 104116 / JCM 14847 / LMG 12228 / 1C / PRS 101 / PAO1).